The chain runs to 496 residues: Lysine--tRNA ligase (496 aa).

Residues E409 and E416 each coordinate Mg(2+).

It belongs to the class-II aminoacyl-tRNA synthetase family. Homodimer. Mg(2+) is required as a cofactor.

It localises to the cytoplasm. It carries out the reaction tRNA(Lys) + L-lysine + ATP = L-lysyl-tRNA(Lys) + AMP + diphosphate. The polypeptide is Lysine--tRNA ligase (Streptococcus mutans serotype c (strain ATCC 700610 / UA159)).